A 151-amino-acid chain; its full sequence is Protein-export protein SecB (151 aa).

It belongs to the SecB family. In terms of assembly, homotetramer, a dimer of dimers. One homotetramer interacts with 1 SecA dimer.

It is found in the cytoplasm. One of the proteins required for the normal export of preproteins out of the cell cytoplasm. It is a molecular chaperone that binds to a subset of precursor proteins, maintaining them in a translocation-competent state. It also specifically binds to its receptor SecA. This Azoarcus sp. (strain BH72) protein is Protein-export protein SecB.